The primary structure comprises 344 residues: tRNA(Ile)-lysidine synthase (344 aa).

Residue 43–48 (SGGADS) participates in ATP binding.

This sequence belongs to the tRNA(Ile)-lysidine synthase family.

It is found in the cytoplasm. It carries out the reaction cytidine(34) in tRNA(Ile2) + L-lysine + ATP = lysidine(34) in tRNA(Ile2) + AMP + diphosphate + H(+). Its function is as follows. Ligates lysine onto the cytidine present at position 34 of the AUA codon-specific tRNA(Ile) that contains the anticodon CAU, in an ATP-dependent manner. Cytidine is converted to lysidine, thus changing the amino acid specificity of the tRNA from methionine to isoleucine. In Bordetella parapertussis (strain 12822 / ATCC BAA-587 / NCTC 13253), this protein is tRNA(Ile)-lysidine synthase.